We begin with the raw amino-acid sequence, 183 residues long: Type II secretion system protein H (183 aa).

Positions 1-5 (MRQRG) are cleaved as a propeptide — leader sequence. Phenylalanine 6 is subject to N-methylphenylalanine. The helical transmembrane segment at 6–26 (FTVLEMMLVVLLMGSAASLVI) threads the bilayer.

Type II secretion is composed of four main components: the outer membrane complex, the inner membrane complex, the cytoplasmic secretion ATPase and the periplasm-spanning pseudopilus. Interacts with core component PulG. Interacts with PulM. Post-translationally, cleaved by prepilin peptidase. Methylated by prepilin peptidase at the amino group of the N-terminal phenylalanine once the leader sequence is cleaved by prepilin peptidase.

It localises to the cell inner membrane. Component of the type II secretion system required for the energy-dependent secretion of extracellular factors such as proteases and toxins from the periplasm. Part of the pseudopilus tip complex that is critical for the recognition and binding of secretion substrates. This is Type II secretion system protein H (pulH) from Klebsiella michiganensis (strain ATCC 8724 / DSM 4798 / JCM 20051 / NBRC 3318 / NRRL B-199 / KCTC 1686 / BUCSAV 143 / CCM 1901).